A 212-amino-acid polypeptide reads, in one-letter code: MKYQLDAREARVIGCMLEKQITTPDQYPMSLNSITTACNQKTNREPVTELSESEVQQTLDLLVKKHFLRTLSGFGNRVVKYEHRFCNSEFGDLKLSPAEVALVTTLLLRGPQTPGELRTRAARLYDFSDVGEAESTLDQLQQRDDGPFVVRLAREAGKRESRYRHLFSGEASDAAVLEEESVNDNSHPLAERVEALETEVAELKRQLAALLA.

This sequence belongs to the UPF0502 family.

This Pectobacterium atrosepticum (strain SCRI 1043 / ATCC BAA-672) (Erwinia carotovora subsp. atroseptica) protein is UPF0502 protein ECA2523.